A 320-amino-acid chain; its full sequence is Calnexin-independence factor 1 (320 aa).

The disordered stretch occupies residues S16–E36.

It is found in the nucleus. Its subcellular location is the nucleolus. In terms of biological role, induces a stably inheritable state of calnexin independence called the Cin state when overexpressed. This chain is Calnexin-independence factor 1 (cif1), found in Schizosaccharomyces pombe (strain 972 / ATCC 24843) (Fission yeast).